The sequence spans 556 residues: Hydroxylamine reductase (556 aa).

[4Fe-4S] cluster is bound by residues Cys5, Cys8, Cys17, and Cys23. Residues His249, Glu273, Cys317, Cys409, Cys437, Cys462, Glu497, and Lys499 each coordinate hybrid [4Fe-2O-2S] cluster. Cys409 carries the post-translational modification Cysteine persulfide.

This sequence belongs to the HCP family. [4Fe-4S] cluster serves as cofactor. It depends on hybrid [4Fe-2O-2S] cluster as a cofactor.

The protein localises to the cytoplasm. It catalyses the reaction A + NH4(+) + H2O = hydroxylamine + AH2 + H(+). Functionally, catalyzes the reduction of hydroxylamine to form NH(3) and H(2)O. In Kosmotoga olearia (strain ATCC BAA-1733 / DSM 21960 / TBF 19.5.1), this protein is Hydroxylamine reductase.